A 601-amino-acid chain; its full sequence is Oligoendopeptidase F, plasmid (601 aa).

His-387 contacts Zn(2+). Glu-388 is a catalytic residue. His-391 and His-394 together coordinate Zn(2+).

This sequence belongs to the peptidase M3B family. Zn(2+) serves as cofactor.

Functionally, hydrolyzes peptides containing between 7 and 17 amino acids with a rather wide specificity. This chain is Oligoendopeptidase F, plasmid (pepF1), found in Lactococcus lactis subsp. cremoris (Streptococcus cremoris).